We begin with the raw amino-acid sequence, 71 residues long: Small ribosomal subunit protein bS21 (71 aa).

Belongs to the bacterial ribosomal protein bS21 family.

The polypeptide is Small ribosomal subunit protein bS21 (Acidithiobacillus ferrooxidans (strain ATCC 23270 / DSM 14882 / CIP 104768 / NCIMB 8455) (Ferrobacillus ferrooxidans (strain ATCC 23270))).